A 487-amino-acid polypeptide reads, in one-letter code: Cysteine--tRNA ligase (487 aa).

Position 29 (Cys29) interacts with Zn(2+). The short motif at 31–41 is the 'HIGH' region element; sequence VTVYDVNHVGH. The Zn(2+) site is built by Cys209, His234, and Glu238. Residues 266 to 270 carry the 'KMSKS' region motif; the sequence is KMSKS. Lys269 provides a ligand contact to ATP.

Belongs to the class-I aminoacyl-tRNA synthetase family. In terms of assembly, monomer. Requires Zn(2+) as cofactor.

Its subcellular location is the cytoplasm. The enzyme catalyses tRNA(Cys) + L-cysteine + ATP = L-cysteinyl-tRNA(Cys) + AMP + diphosphate. This is Cysteine--tRNA ligase from Persephonella marina (strain DSM 14350 / EX-H1).